A 619-amino-acid polypeptide reads, in one-letter code: Coagulation factor X-activating enzyme heavy chain (619 aa).

The N-terminal stretch at 1-20 is a signal peptide; that stretch reads MMQVLLVTISLAVFPYQGSS. A propeptide spanning residues 21-188 is cleaved from the precursor; the sequence is IILESGNVND…SDKPIKKASQ (168 aa). Residues 199–393 enclose the Peptidase M12B domain; that stretch reads IFIELVIIVD…YKPKCIFNPP (195 aa). Cysteines 215 and 251 form a disulfide. Residues N216 and N257 are each glycosylated (N-linked (GlcNAc...) (complex) asparagine). 3 disulfides stabilise this stretch: C308-C388, C348-C372, and C350-C355. H333 serves as a coordination point for Zn(2+). Residue E334 is part of the active site. Positions 337 and 343 each coordinate Zn(2+). N351 and N371 each carry an N-linked (GlcNAc...) (complex) asparagine glycan. A Disintegrin domain is found at 401–487; sequence PPVCGNEIWE…ECPRDQLQQN (87 aa). V403, N406, I408, E410, E413, and D416 together coordinate Ca(2+). Disulfide bonds link C404/C433, C415/C428, C417/C423, C427/C450, C441/C447, C446/C472, C459/C479, C466/C498, C491/C503, C510/C560, C525/C571, C538/C548, C555/C597, and C591/C603. Residues 465–467 carry the D/ECD-tripeptide motif; that stretch reads ECD. Residues D467, V468, E470, D482, and Q483 each coordinate Ca(2+).

The protein belongs to the venom metalloproteinase (M12B) family. P-III subfamily. P-IIId sub-subfamily. Heterotrimer; disulfide-linked. The heterotrimer consists of 1 heavy chain and 2 light chains (lectins): LC1 and LC2. Requires Zn(2+) as cofactor. In terms of processing, N-glycosylated; probably required for conformation. Removal of easily accessible sugars does not change its functional capacity, but removal of the core sugars with N-glycanase causes a virtually complete loss of enzyme activity, apparently as a result of major conformational changes in the molecule. Not O-glycosylated. Expressed by the venom gland.

It is found in the secreted. The enzyme catalyses Specifically activates several components of the blood clotting system, including coagulation factor X, coagulation factor IX and protein C by cleavage of Arg-|-Xaa bonds. Has no action on insulin B chain.. Functionally, catalytic subunit of blood coagulation factor X-activating enzyme. Activates coagulation factor X (F10) by cleaving the Arg-Ile bond and is also able to activate coagulation factor IX (F9) and protein S (PROS1) by specific cleavage of Arg-Ile and Arg-Val bonds. The protein is Coagulation factor X-activating enzyme heavy chain of Daboia siamensis (Eastern Russel's viper).